We begin with the raw amino-acid sequence, 504 residues long: Acetyltransferase pyiB (504 aa).

Positions 1 to 18 (MGFLSAGGLWASLFRARI) are cleaved as a signal peptide. Residue asparagine 84 is glycosylated (N-linked (GlcNAc...) asparagine). Catalysis depends on histidine 181, which acts as the Proton acceptor. Residues asparagine 413 and asparagine 467 are each glycosylated (N-linked (GlcNAc...) asparagine).

It belongs to the plant acyltransferase family.

The protein operates within mycotoxin biosynthesis. Acetyltransferase; part of the gene cluster that mediates the biosynthesis of the mycotoxin pyrichalasin H, a tyrosine-derived cytochalasan that inhibits the growth of rice seedlings, but also inhibits lymphocyte capping and actin polymerization and alters cell morphology. Pyrichalasin H is indicated as the responsible agent for the genus-specific pathogenicity of M.grisea toward crabgrass. The first step in the pathway is catalyzed by the O-methyltransferase pyiA which methylates free tyrosine to generate the precursor O-methyltyrosine. The hybrid PKS-NRPS pyiS, assisted by the enoyl reductase pyiC, are responsible for fusion of the O-methyltyrosine precursor and the polyketide backbone. The polyketide synthase module (PKS) of pyiS is responsible for the synthesis of the polyketide backbone and the downstream nonribosomal peptide synthetase (NRPS) amidates the carboxyl end of the polyketide with the O-methyltyrosine precursor. As the NRPS A-domain demonstrates substrate tolerance, pyiS can also use phenylalanine, tyrosine and even para-chlorophenylalanine as amino acid precursor, which leads to the production of novel cytochalasans, including halogenated cytochalasans. Because pyiS lacks a designated enoylreductase (ER) domain, the required activity is provided the enoyl reductase pyiC. Reduction by the hydrolyase pyiE leads to 1,5-dihydropyrrolone, which is substrate for dehydration and intra-molecular Diels-Alder cyclization by the Diels-Alderase pyiF to yield the required isoindolone-fused macrocycle. The tailoring cytochrome P450 monooxygenases piyD and piyG catalyze the hydroxylation at C-18 and C-7, respectivily, whereas the short-chain dehydrogenase/reductase pyiH reduces the carbonyl at C-21 in preparation for the transfer of an acetyl group by the acetyltransferase pyiB. These 3 reactions whose order is not clear yet, lead to the production of O-methylpyrichalasin J, a deacetylated pyrichalasin H. Finally, pyiB to converts O-methylpyrichalasin J into the final product pyrichalasin H via acetylation of C-21. This Pyricularia grisea (Crabgrass-specific blast fungus) protein is Acetyltransferase pyiB.